Consider the following 47-residue polypeptide: Conotoxin Bu10 (47 aa).

Residues 1–22 (DSRGTQLHRALRKATILSVSAR) constitute a propeptide that is removed on maturation. 3 disulfide bridges follow: Cys23/Cys37, Cys30/Cys41, and Cys36/Cys46. Position 46 is a cysteine amide (Cys46).

This sequence belongs to the conotoxin O1 superfamily. In terms of tissue distribution, expressed by the venom duct.

Its subcellular location is the secreted. The protein is Conotoxin Bu10 of Conus bullatus (Bubble cone).